We begin with the raw amino-acid sequence, 454 residues long: N-myc 2 proto-oncogene protein (454 aa).

Disordered stretches follow at residues Ser132 to Thr166, Val230 to Glu269, and Pro325 to Arg374. The segment covering Pro151–Arg161 has biased composition (low complexity). A compositionally biased stretch (acidic residues) spans Ala256–Glu269. Positions Arg363–Arg374 are enriched in basic and acidic residues. Positions Val371–Leu423 constitute a bHLH domain. The leucine-zipper stretch occupies residues Leu423–Leu444.

Efficient DNA binding requires dimerization with another bHLH protein.

The protein localises to the nucleus. This is N-myc 2 proto-oncogene protein (N-MYC2) from Marmota monax (Woodchuck).